Consider the following 64-residue polypeptide: MTKITIVKCPQCGTDVEWGEQSPHRPFCSKKCQMIDFGEWADEENAIPGAPDMSDSDGWSEEQY.

The Zn(2+) site is built by Cys9, Cys12, Cys28, and Cys32. The tract at residues 42–64 (DEENAIPGAPDMSDSDGWSEEQY) is disordered. Positions 54–64 (SDSDGWSEEQY) are enriched in acidic residues.

Belongs to the DNA gyrase inhibitor YacG family. As to quaternary structure, interacts with GyrB. Zn(2+) is required as a cofactor.

Functionally, inhibits all the catalytic activities of DNA gyrase by preventing its interaction with DNA. Acts by binding directly to the C-terminal domain of GyrB, which probably disrupts DNA binding by the gyrase. In Vibrio vulnificus (strain YJ016), this protein is DNA gyrase inhibitor YacG.